A 418-amino-acid chain; its full sequence is MSDLLPLAAYNLNIEPYTPTPAIDVTTPVTVRITMAAIDPEALDDEKNPSTLRIIKRNPDYDDEDDAGGLLGDYDEDELDISEEEEEEEEKSKSKKGKGKGKSKKQEEEEEEEEEDEDEGDEELIEIDTDDEFQEFVLATLSPKTQYQQSLDIVIAPEEEVQFIVTGSYRVSLTGNYVKHPFDAPGYDDEDDDEEDDESYDEDEDDYLTPDEEADLEELEDASDVEAKIQELVEKEQSKSKKNNKRKQPEPEEEEEEEEEEEEEQKLVEETKKNKKAKKEKKVEFKKDLEEGPTKKEEKKEEKKEKPKTKVLEGGIIIEDRVTGKGKACKKGSKVGMRYIGKLKNGKVFDKNTSGKPFVFNLGRGEVIKGWDIGVAGMAVGGERRIVIPAPYAYGKQALPGIPANSELTFDVKLVSLK.

Disordered regions lie at residues 49–133, 172–273, and 289–309; these read PSTL…DDEF, SLTG…ETKK, and LEEG…KPKT. A compositionally biased stretch (acidic residues) spans 61–89; it reads YDDEDDAGGLLGDYDEDELDISEEEEEEE. Residues 93–103 are compositionally biased toward basic residues; that stretch reads KSKKGKGKGKS. Acidic residues-rich tracts occupy residues 108–133 and 186–224; these read EEEE…DDEF and GYDD…DASD. Over residues 225–239 the composition is skewed to basic and acidic residues; the sequence is VEAKIQELVEKEQSK. Residues 251–264 are compositionally biased toward acidic residues; that stretch reads PEEEEEEEEEEEEE. In terms of domain architecture, PPIase FKBP-type spans 332–418; that stretch reads GSKVGMRYIG…TFDVKLVSLK (87 aa).

The protein belongs to the FKBP-type PPIase family. FKBP3/4 subfamily.

Its subcellular location is the nucleus. The protein localises to the nucleolus. It carries out the reaction [protein]-peptidylproline (omega=180) = [protein]-peptidylproline (omega=0). Inhibited by both FK506 and rapamycin. Functionally, PPIases accelerate the folding of proteins. It catalyzes the cis-trans isomerization of proline imidic peptide bonds in oligopeptides. The polypeptide is FK506-binding protein 3 (FPR3) (Kluyveromyces lactis (strain ATCC 8585 / CBS 2359 / DSM 70799 / NBRC 1267 / NRRL Y-1140 / WM37) (Yeast)).